The sequence spans 556 residues: 2-isopropylmalate synthase (556 aa).

The region spanning 33–307 (PIWCSSDLRD…NPELDFSDID (275 aa)) is the Pyruvate carboxyltransferase domain. Mg(2+) is bound by residues aspartate 42, histidine 246, histidine 248, and asparagine 282. Residues 439-556 (ANTPYALISH…SLSQAQAKAA (118 aa)) form a regulatory domain region.

Belongs to the alpha-IPM synthase/homocitrate synthase family. LeuA type 2 subfamily. As to quaternary structure, homodimer. Requires Mg(2+) as cofactor.

The protein resides in the cytoplasm. The catalysed reaction is 3-methyl-2-oxobutanoate + acetyl-CoA + H2O = (2S)-2-isopropylmalate + CoA + H(+). It functions in the pathway amino-acid biosynthesis; L-leucine biosynthesis; L-leucine from 3-methyl-2-oxobutanoate: step 1/4. In terms of biological role, catalyzes the condensation of the acetyl group of acetyl-CoA with 3-methyl-2-oxobutanoate (2-ketoisovalerate) to form 3-carboxy-3-hydroxy-4-methylpentanoate (2-isopropylmalate). The sequence is that of 2-isopropylmalate synthase from Pseudomonas syringae pv. tomato (strain ATCC BAA-871 / DC3000).